The sequence spans 239 residues: Uridylate kinase (239 aa).

13-16 (KISG) lines the ATP pocket. Glycine 55 contacts UMP. ATP-binding residues include glycine 56 and arginine 60. Residues aspartate 75 and 136–143 (LGIPFFTT) contribute to the UMP site. Residues threonine 163, tyrosine 169, and aspartate 172 each contribute to the ATP site.

This sequence belongs to the UMP kinase family. As to quaternary structure, homohexamer.

It localises to the cytoplasm. The catalysed reaction is UMP + ATP = UDP + ADP. The protein operates within pyrimidine metabolism; CTP biosynthesis via de novo pathway; UDP from UMP (UMPK route): step 1/1. With respect to regulation, inhibited by UTP. Functionally, catalyzes the reversible phosphorylation of UMP to UDP. This chain is Uridylate kinase, found in Buchnera aphidicola subsp. Cinara cedri (strain Cc).